Consider the following 511-residue polypeptide: LEM domain-containing protein 2 (511 aa).

The residue at position 2 (Ala-2) is an N-acetylalanine. In terms of domain architecture, LEM spans 2-42 (AGLSDLELRRELQALGFQPGPITDTTRNVYRNKLRRLRGEA). Disordered regions lie at residues 18-110 (FQPG…SDAS) and 128-206 (GLSY…AGRT). Residues 38–80 (LRGEARLRDDERLREDAGPREDAGPRGPERQREEARLREEAPL) are compositionally biased toward basic and acidic residues. Residues 80–112 (LRARPAASVLRSEPWPLSPSPPAPSAASDASGP) form an interaction with lamin A/C complexes region. Residues 80 to 141 (LRARPAASVL…PPHAGPGPLR (62 aa)) form a required for nuclear retention and interaction with LMNA isoform C region. Composition is skewed to low complexity over residues 81–94 (RARPAASVLRSEPW) and 172–183 (APPSASARPHSA). The next 2 membrane-spanning stretches (helical) occupy residues 221 to 241 (LLLWASLGLLLGFLAILWVKM) and 385 to 405 (VTHVLIFFWCLAFLWGLLILL). A winged-Helix (WH) region spans residues 403–511 (ILLKYRWRKL…KPSSFSDSER (109 aa)). Phosphoserine is present on residues Ser-505, Ser-507, and Ser-509.

Interacts (via N-terminus) with LMNA isoform C (via C-terminus) (in vitro). Interacts (via LEM domain) with BANF1. Interacts (via C-terminus) with CHMP7. Interacts (via N-terminus) with tubulin; the interaction causes microtubule bundling and stabilization (in vitro). In terms of processing, phosphorylated; strongly phosphorylated in mitosis compared to G1/S. As to expression, ubiquitously expressed, including liver, brain, heart, skeletal muscle, lung, testis, spleen, kidney and white adipose tissue.

Its subcellular location is the nucleus inner membrane. It is found in the nucleus envelope. The protein resides in the cytoplasm. The protein localises to the cytoskeleton. It localises to the spindle. Its function is as follows. Nuclear lamina-associated inner nuclear membrane protein that is involved in nuclear structure organization and maintenance of nuclear envelope (NE) integrity and NE reformation after mitosis. Plays a role as transmembrane adapter for the endosomal sorting complexes required for transport (ESCRT), and is thereby involved in ESCRT-mediated NE reformation. Promotes ESCRT-mediated NE closure by recruiting CHMP7 and downstream ESCRT-III proteins IST1/CHMP8 and CHMP2A to the reforming NE during anaphase. During nuclear reassembly, condenses into a liquid-like coating around microtubule spindles and coassembles with CHMP7 to form a macromolecular O-ring seal at the confluence between membranes, chromatin, and the spindle to facilitate early nuclear sealing. Plays a role in the organization of heterochromatin associated with the NE and in the maintenance of NE organization under mechanical stress. Required for embryonic development and is involved in regulation of several signaling pathways such as MAPK and AKT. Required for myoblast differentiation involving regulation of ERK signaling. Essential for cardiac homeostasis and proper heart function. The polypeptide is LEM domain-containing protein 2 (Lemd2) (Mus musculus (Mouse)).